The primary structure comprises 279 residues: 1D-myo-inositol 2-acetamido-2-deoxy-alpha-D-glucopyranoside deacetylase (279 aa).

Positions 12, 15, and 146 each coordinate Zn(2+).

It belongs to the MshB deacetylase family. Zn(2+) is required as a cofactor.

The enzyme catalyses 1D-myo-inositol 2-acetamido-2-deoxy-alpha-D-glucopyranoside + H2O = 1D-myo-inositol 2-amino-2-deoxy-alpha-D-glucopyranoside + acetate. Its function is as follows. Catalyzes the deacetylation of 1D-myo-inositol 2-acetamido-2-deoxy-alpha-D-glucopyranoside (GlcNAc-Ins) in the mycothiol biosynthesis pathway. The chain is 1D-myo-inositol 2-acetamido-2-deoxy-alpha-D-glucopyranoside deacetylase from Mycobacteroides abscessus (strain ATCC 19977 / DSM 44196 / CCUG 20993 / CIP 104536 / JCM 13569 / NCTC 13031 / TMC 1543 / L948) (Mycobacterium abscessus).